We begin with the raw amino-acid sequence, 267 residues long: Diphthine--ammonia ligase (267 aa).

Y97 carries the post-translational modification Phosphotyrosine.

Belongs to the Diphthine--ammonia ligase family.

The enzyme catalyses diphthine-[translation elongation factor 2] + NH4(+) + ATP = diphthamide-[translation elongation factor 2] + AMP + diphosphate + H(+). It participates in protein modification; peptidyl-diphthamide biosynthesis. In terms of biological role, amidase that catalyzes the last step of diphthamide biosynthesis using ammonium and ATP. Diphthamide biosynthesis consists in the conversion of an L-histidine residue in the translation elongation factor 2 (EEF2) to diphthamide. This is Diphthine--ammonia ligase (Dph6) from Mus musculus (Mouse).